A 304-amino-acid chain; its full sequence is MDDQPINIVTDIKNAICKDDLDSFIILMENNPSINLFCEPDKQSIDFGGIIQPIEFCKNNDLIKMVNEVDDQLIDHYISTVLREEVIKNCSVKILKYLFDMGLPVDFGRNFSIRLCSTKYLGSNHYIKENPGQDTLSLLRLLIEYGVDVNAHNYLPLYSAVSSKNFDKVKLLVENGANVLRVANGNENSFYFKIDSIKYLLDNGVEIDMNLSRALFLSIKDNSIECIQFYLELGADINKISPMDIIGLIKLRNIVGIRLLIENGFDFTSLNKLAGNNNERIIDVLINEANVDISALLKILLEFW.

ANK repeat units follow at residues 7–36, 77–107, 122–151, 152–181, 183–209, 210–239, and 265–293; these read NIVTDIKNAICKDDLDSFIILMENNPSINL, YISTVLREEVIKNCSVKILKYLFDMGLPVDF, GSNHYIKENPGQDTLSLLRLLIEYGVDVNA, HNYLPLYSAVSSKNFDKVKLLVENGANVLR, ANGNENSFYFKIDSIKYLLDNGVEIDM, NLSRALFLSIKDNSIECIQFYLELGADINK, and FDFTSLNKLAGNNNERIIDVLINEANVDI.

This is Putative ankyrin repeat protein R598 from Acanthamoeba polyphaga (Amoeba).